A 206-amino-acid polypeptide reads, in one-letter code: VEL1-related protein YOR387C (206 aa).

Residues M1–A19 form the signal peptide. N-linked (GlcNAc...) asparagine glycosylation is found at N26, N48, N91, N139, N152, and N183.

Belongs to the VEL1 family. N-glycosylated.

The protein resides in the cytoplasm. The protein localises to the cytosol. This chain is VEL1-related protein YOR387C, found in Saccharomyces cerevisiae (strain ATCC 204508 / S288c) (Baker's yeast).